A 356-amino-acid chain; its full sequence is Geranylgeranyl pyrophosphate synthase penG (356 aa).

Isopentenyl diphosphate contacts are provided by K83, R86, and H115. Mg(2+) contacts are provided by D122 and D126. R131 is a binding site for dimethylallyl diphosphate. R132 contacts isopentenyl diphosphate. The dimethylallyl diphosphate site is built by K209, T210, and Q243. D246 serves as a coordination point for Mg(2+). The dimethylallyl diphosphate site is built by N250, K260, and K270.

Belongs to the FPP/GGPP synthase family. Mg(2+) serves as cofactor.

The catalysed reaction is isopentenyl diphosphate + dimethylallyl diphosphate = (2E)-geranyl diphosphate + diphosphate. The enzyme catalyses isopentenyl diphosphate + (2E)-geranyl diphosphate = (2E,6E)-farnesyl diphosphate + diphosphate. It carries out the reaction isopentenyl diphosphate + (2E,6E)-farnesyl diphosphate = (2E,6E,10E)-geranylgeranyl diphosphate + diphosphate. Its pathway is secondary metabolite biosynthesis. Geranylgeranyl pyrophosphate synthase; part of the gene cluster that mediates the biosynthesis of the indole diterpenes penitrems. The geranylgeranyl diphosphate (GGPP) synthase ptmG catalyzes the first step in penitrem biosynthesis via conversion of farnesyl pyrophosphate and isopentyl pyrophosphate into geranylgeranyl pyrophosphate (GGPP). Condensation of indole-3-glycerol phosphate with GGPP by the prenyl transferase ptmC then forms 3-geranylgeranylindole (3-GGI). Epoxidation by the FAD-dependent monooxygenase ptmM leads to a epoxidized-GGI that is substrate of the terpene cyclase ptmB for cyclization to yield paspaline. Paspaline is subsequently converted to 13-desoxypaxilline by the cytochrome P450 monooxygenase ptmP, the latter being then converted to paxilline by the cytochrome P450 monooxygenase ptmQ. Paxilline is converted to beta-paxitriol via C-10 ketoreduction by the short-chain dehydrogenase ptmH which can be monoprenylated at the C-20 by the indole diterpene prenyltransferase ptmD. A two-step elimination (acetylation and elimination) process performed by the O-acetyltransferase ptmV and ptmI leads to the production of the prenylated form of penijanthine. The FAD-linked oxidoreductase ptmO then converts the prenylated form of penijanthine into PC-M5 which is in turn transformed into PC-M4 by the aromatic dimethylallyltransferase ptmE. Five sequential oxidative transformations performed by the cytochrome P450 monooxygenases ptmK, ptmU, ptmL, ptmN and ptmJ yield the various penitrem compounds. PtmK, ptmU and ptmM are involved in the formation of the key bicyclic ring of penitrem C via the formation of the intermediates secopenitrem D and penitrem D. PtmL catalyzes the epoxidation of penitrem D and C to yield penitrem B and F, respectively. PtmJ catalyzes the last benzylic hydroxylation to convert penitrem B to prenitrem E and penitrem F to penitrem A. This is Geranylgeranyl pyrophosphate synthase penG from Penicillium ochrochloron.